A 334-amino-acid polypeptide reads, in one-letter code: 2,3-bisphosphoglycerate-dependent phosphoglycerate mutase 1 (334 aa).

The N-terminal 48 residues, 1–48 (MATATSHQSVVSFASLRSSPSSTISQCGFKIDSSLSFTSKKTNFCKIK), are a transit peptide targeting the chloroplast. Substrate-binding positions include 84–91 (RHGESLWN), 97–98 (TG), Arg-134, 188–191 (ERMY), Lys-199, 215–216 (RR), and 259–260 (GN). His-85 (tele-phosphohistidine intermediate) is an active-site residue. The active-site Proton donor/acceptor is the Glu-188.

It belongs to the phosphoglycerate mutase family. BPG-dependent PGAM subfamily.

The protein localises to the plastid. It localises to the chloroplast. The catalysed reaction is (2R)-2-phosphoglycerate = (2R)-3-phosphoglycerate. Its pathway is carbohydrate degradation; glycolysis; pyruvate from D-glyceraldehyde 3-phosphate: step 3/5. Catalyzes the interconversion of 2-phosphoglycerate and 3-phosphoglycerate. The sequence is that of 2,3-bisphosphoglycerate-dependent phosphoglycerate mutase 1 from Arabidopsis thaliana (Mouse-ear cress).